Consider the following 486-residue polypeptide: N-succinylglutamate 5-semialdehyde dehydrogenase (486 aa).

Position 220–225 (220–225 (GSSRTG)) interacts with NAD(+). Active-site residues include glutamate 243 and cysteine 277.

The protein belongs to the aldehyde dehydrogenase family. AstD subfamily.

It catalyses the reaction N-succinyl-L-glutamate 5-semialdehyde + NAD(+) + H2O = N-succinyl-L-glutamate + NADH + 2 H(+). The protein operates within amino-acid degradation; L-arginine degradation via AST pathway; L-glutamate and succinate from L-arginine: step 4/5. Catalyzes the NAD-dependent reduction of succinylglutamate semialdehyde into succinylglutamate. This is N-succinylglutamate 5-semialdehyde dehydrogenase from Shewanella piezotolerans (strain WP3 / JCM 13877).